The primary structure comprises 126 residues: Chorion class B protein M1768 (126 aa).

Positions 1-17 (YGGLGYGGLGGGCGRGF) are left arm. Positions 18 to 86 (SGGGLPVATA…GNGAVGITRE (69 aa)) are central domain. A right arm (Gly-rich tandem repeats) region spans residues 87–126 (GGFGYGAGYGDGYGLGFGGYGGGYGLGYGGYGGCGCSWGY).

It belongs to the chorion protein family.

In terms of biological role, this protein is one of many from the eggshell of the silk moth. This Bombyx mori (Silk moth) protein is Chorion class B protein M1768.